Reading from the N-terminus, the 95-residue chain is Alpha-conotoxin-like Cp20.4 (95 aa).

The first 24 residues, 1–24 (MPKLEMMLVVLLIFPLFYFDAAGG), serve as a signal peptide directing secretion. Residues 25–45 (QAVQGDRRGDGLARYLQRGDR) constitute a propeptide that is removed on maturation. Residue E50 is modified to 4-carboxyglutamate. The residue at position 56 (P56) is a 4-hydroxyproline. Intrachain disulfides connect C64–C73, C69–C81, C74–C91, and C79–C93.

The protein belongs to the conotoxin D superfamily. In terms of assembly, hetero-, homo- or pseudo-homodimer (identical sequence, different post-translational modifications). As to expression, expressed by the venom duct.

The protein resides in the secreted. In terms of biological role, alpha-conotoxins act on postsynaptic membranes, they bind to the nicotinic acetylcholine receptors (nAChR) and thus inhibit them. Through its two C-terminal domains, this homodimeric protein would bind to two nAChR allosteric sites, located outside the nAChR C-loop of the principal binding face and at the adjacent binding interface in a clockwise direction. This toxin specifically blocks mammalian neuronal nAChR of the alpha-7/CHRNA7, alpha-3-beta-2/CHRNA3-CHRNB2 and alpha-4-beta-2/CHRNA4-CHRNB2 subtypes. This chain is Alpha-conotoxin-like Cp20.4, found in Conus capitaneus (Captain cone).